Consider the following 158-residue polypeptide: Chromobox protein homolog 7 (158 aa).

The 59-residue stretch at 11 to 69 (FAVESIRKKRVRKGKVEYLVKWKGWPPKYSTWEPEEHILDPRLVMAYEEKEERDRASGY) folds into the Chromo domain. The segment at 60 to 127 (KEERDRASGY…WTPTLPSSEV (68 aa)) is disordered. Residues 68–78 (GYRKRGPKPRR) are compositionally biased toward basic residues.

As to quaternary structure, component of a PRC1-like complex. Distinct PRC1-like core complexes are composed of a RING1 subunit (RING1B or RING1A), one of the six PCGF proteins (PCGF1-6), one PHC protein (PHC1-3) and one of the CBX proteins (CBX2, CBX4, CBX6, CBX7 or CBX8). The composition of the PRC1 complex may differ between the PRC1 complex in pluripotent embryonic stem cells containing RNF2, CBX7 and PCGF2, and the PRC1 complex in differentiating cells containing RNF2, CBX2, CBX4 and BMI1. Interacts with RING1. Interacts with RNF2, PHC1 and PCGF2. Interacts (via chromodomain) with histone H3K9Me3 and H3K27me3. Interacts with H3K9Me2 and H4K20Me1. Interacts (via chromodomain) with single-stranded and double-stranded RNA; RNA binding seems to be required for the localization to chromatin. Interacts with PCGF1, PCGF3, PCGF5 and PCGF6. As to expression, expressed in embryonic stem cells.

The protein localises to the nucleus. Its subcellular location is the chromosome. In terms of biological role, component of a Polycomb group (PcG) multiprotein PRC1-like complex, a complex class required to maintain the transcriptionally repressive state of many genes, including Hox genes, throughout development. PcG PRC1 complex acts via chromatin remodeling and modification of histones; it mediates monoubiquitination of histone H2A 'Lys-119', rendering chromatin heritably changed in its expressibility. Promotes histone H3 trimethylation at 'Lys-9' (H3K9me3). Binds to histone H3 trimethylated at 'Lys-9' (H3K9me3) or at 'Lys-27' (H3K27me3). Trimethylation at 'Lys-27' (H3K27me3) is important for chromatin recruitment. May possibly also bind trimethylated lysine residues in other proteins (in vitro). Binds non-coding, single-stranded RNA and double-stranded RNA. Plays a role in the timely repression of differentiation-specific genes in pluripotent embryonic stem cells to maintain the undifferentiated state. Regulator of cellular lifespan by maintaining the repression of CDKN2A, but not by inducing telomerase activity. This is Chromobox protein homolog 7 (Cbx7) from Mus musculus (Mouse).